We begin with the raw amino-acid sequence, 410 residues long: Peptidase T (410 aa).

Zn(2+) is bound at residue H79. Residue D81 is part of the active site. Residue D142 coordinates Zn(2+). The active-site Proton acceptor is the E176. Positions 177, 199, and 381 each coordinate Zn(2+).

Belongs to the peptidase M20B family. Zn(2+) serves as cofactor.

Its subcellular location is the cytoplasm. The catalysed reaction is Release of the N-terminal residue from a tripeptide.. Cleaves the N-terminal amino acid of tripeptides. This Geobacillus sp. (strain WCH70) protein is Peptidase T.